A 93-amino-acid chain; its full sequence is Putative pterin-4-alpha-carbinolamine dehydratase (93 aa).

This sequence belongs to the pterin-4-alpha-carbinolamine dehydratase family.

It carries out the reaction (4aS,6R)-4a-hydroxy-L-erythro-5,6,7,8-tetrahydrobiopterin = (6R)-L-erythro-6,7-dihydrobiopterin + H2O. The sequence is that of Putative pterin-4-alpha-carbinolamine dehydratase from Chloroflexus aurantiacus (strain ATCC 29366 / DSM 635 / J-10-fl).